The primary structure comprises 508 residues: Anthranilate synthase component 1 (508 aa).

L-tryptophan is bound by residues S49 and 282-284; that span reads PYM. 317 to 318 is a binding site for chorismate; the sequence is GT. E344 is a Mg(2+) binding site. Residues Y432, R452, 466 to 468, and G468 each bind chorismate; that span reads GAG. E481 is a binding site for Mg(2+).

The protein belongs to the anthranilate synthase component I family. In terms of assembly, heterotetramer consisting of two non-identical subunits: a beta subunit (TrpG) and a large alpha subunit (TrpE). It depends on Mg(2+) as a cofactor.

The catalysed reaction is chorismate + L-glutamine = anthranilate + pyruvate + L-glutamate + H(+). It functions in the pathway amino-acid biosynthesis; L-tryptophan biosynthesis; L-tryptophan from chorismate: step 1/5. Feedback inhibited by tryptophan. In terms of biological role, part of a heterotetrameric complex that catalyzes the two-step biosynthesis of anthranilate, an intermediate in the biosynthesis of L-tryptophan. In the first step, the glutamine-binding beta subunit (TrpG) of anthranilate synthase (AS) provides the glutamine amidotransferase activity which generates ammonia as a substrate that, along with chorismate, is used in the second step, catalyzed by the large alpha subunit of AS (TrpE) to produce anthranilate. In the absence of TrpG, TrpE can synthesize anthranilate directly from chorismate and high concentrations of ammonia. This chain is Anthranilate synthase component 1 (trpE), found in Geobacillus stearothermophilus (Bacillus stearothermophilus).